The sequence spans 535 residues: Solute carrier family 22 member 7 (535 aa).

Transmembrane regions (helical) follow at residues 21–41 (LVLM…PVFM), 144–164 (ITST…GYLS), 178–198 (VSSL…MFVV), 202–222 (LTGS…LEWL), 232–252 (VIST…GYLI), 257–277 (WLLL…WWVP), 344–364 (ISLC…GLTL), 375–395 (QTQL…YFLV), 402–422 (LTEA…LLVS), 429–449 (ITAL…TAYL), 464–484 (LGLT…AALL), and 489–509 (LLLP…TALL).

It belongs to the major facilitator (TC 2.A.1) superfamily. Organic cation transporter (TC 2.A.1.19) family. Expressed in liver and kidney. Expressed at low levels in adipose tissue. Expressed in fetal liver. In kidney, expressed at the brush border of the proximal tubule S3 segment (S3) in the outer stripe and medullary rays. In kidney, expression is higher in female than male.

The protein resides in the basolateral cell membrane. It localises to the apical cell membrane. The protein localises to the cell membrane. The enzyme catalyses orotate(out) + L-glutamate(in) = orotate(in) + L-glutamate(out). It carries out the reaction 3',5'-cyclic GMP(in) = 3',5'-cyclic GMP(out). It catalyses the reaction GMP(in) = GMP(out). The catalysed reaction is 2'-deoxyguanosine(in) = 2'-deoxyguanosine(out). The enzyme catalyses GDP(in) = GDP(out). It carries out the reaction guanosine(in) = guanosine(out). It catalyses the reaction GTP(in) = GTP(out). The catalysed reaction is 3',5'-cyclic AMP(in) = 3',5'-cyclic AMP(out). The enzyme catalyses creatinine(in) = creatinine(out). It carries out the reaction prostaglandin E2(out) = prostaglandin E2(in). It catalyses the reaction 2-oxoglutarate(in) = 2-oxoglutarate(out). The catalysed reaction is glutarate(in) = glutarate(out). The enzyme catalyses urate(out) = urate(in). It carries out the reaction estrone 3-sulfate(out) = estrone 3-sulfate(in). Functions as a Na(+)-independent bidirectional multispecific transporter. Contributes to the renal and hepatic elimination of endogenous organic compounds from the systemic circulation into the urine and bile, respectively. Capable of transporting a wide range of purine and pyrimidine nucleobases, nucleosides, and nucleotides with cGMP, 2'deoxyguanosine and GMP being the preferred substrates. Functions as a pH- and chloride-independent cGMP bidirectional facilitative transporter that can regulate both intracellular and extracellular levels of cGMP and may be involved in cGMP signaling pathways. Mediates orotate/glutamate bidirectional exchange and most likely display a physiological role in hepatic release of glutamate into the blood. Involved in renal secretion and possible reabsorption of creatinine. Able to uptake prostaglandin E2 (PGE2) and may contribute to PGE2 renal excretion. Also transports alpha-ketoglutarate and urate. Apart from the orotate/glutamate exchange, the counterions for the uptake of other SLC22A7/OAT2 substrates remain to be identified. The protein is Solute carrier family 22 member 7 of Rattus norvegicus (Rat).